The following is a 552-amino-acid chain: Hydroxylamine reductase (552 aa).

Residues Cys3, Cys6, Cys18, and Cys25 each contribute to the [2Fe-2S] cluster site. Hybrid [4Fe-2O-2S] cluster is bound by residues His250, Glu274, Cys318, Cys406, Cys434, Cys459, Glu493, and Lys495. Cys406 is subject to Cysteine persulfide.

It belongs to the HCP family. Requires [2Fe-2S] cluster as cofactor. The cofactor is hybrid [4Fe-2O-2S] cluster.

It localises to the cytoplasm. The catalysed reaction is A + NH4(+) + H2O = hydroxylamine + AH2 + H(+). Its function is as follows. Catalyzes the reduction of hydroxylamine to form NH(3) and H(2)O. The polypeptide is Hydroxylamine reductase (Shewanella sediminis (strain HAW-EB3)).